We begin with the raw amino-acid sequence, 248 residues long: ATP synthase subunit a (248 aa).

7 helical membrane passes run 29–49 (AMLTTCVSLSFFLFLFYCLFS), 85–105 (VFPFLFVIFSFILISNVQGLV), 115–135 (LIQTMVLALTVFIGVIIIVLA), 143–163 (LFLPGGTSIVLAFLLVPIEIV), 176–196 (LFANMMAGHTLLKVIAAVAWA), 201–221 (GGLLLIAHIVPLGVLVILFGL), and 227–247 (LIQAYVFTILSCIYINDAIVL).

Belongs to the ATPase A chain family. In terms of assembly, F-type ATPases have 2 components, CF(1) - the catalytic core - and CF(0) - the membrane proton channel. CF(1) has five subunits: alpha(3), beta(3), gamma(1), delta(1), epsilon(1). CF(0) has three main subunits: a, b and c.

It is found in the mitochondrion inner membrane. In terms of biological role, mitochondrial membrane ATP synthase (F(1)F(0) ATP synthase or Complex V) produces ATP from ADP in the presence of a proton gradient across the membrane which is generated by electron transport complexes of the respiratory chain. F-type ATPases consist of two structural domains, F(1) - containing the extramembraneous catalytic core and F(0) - containing the membrane proton channel, linked together by a central stalk and a peripheral stalk. During catalysis, ATP synthesis in the catalytic domain of F(1) is coupled via a rotary mechanism of the central stalk subunits to proton translocation. Key component of the proton channel; it may play a direct role in the translocation of protons across the membrane. This Pylaiella littoralis (Seaweed) protein is ATP synthase subunit a (ATP6).